Here is a 177-residue protein sequence, read N- to C-terminus: Ribosome maturation factor RimM (177 aa).

The 82-residue stretch at 96–177 (DNEFYWVDLI…KITVDWGLDY (82 aa)) folds into the PRC barrel domain.

Belongs to the RimM family. Binds ribosomal protein uS19.

The protein resides in the cytoplasm. Its function is as follows. An accessory protein needed during the final step in the assembly of 30S ribosomal subunit, possibly for assembly of the head region. Essential for efficient processing of 16S rRNA. May be needed both before and after RbfA during the maturation of 16S rRNA. It has affinity for free ribosomal 30S subunits but not for 70S ribosomes. This Herminiimonas arsenicoxydans protein is Ribosome maturation factor RimM.